We begin with the raw amino-acid sequence, 462 residues long: uncharacterized protein (462 aa).

Residues 22–90 (KPIYKALAGQ…VGSGTFVSYD (69 aa)) form the HTH gntR-type domain. A DNA-binding region (H-T-H motif) is located at residues 50 to 69 (QRELADYLDLNVSTISKAFK). Residue K308 is modified to N6-(pyridoxal phosphate)lysine.

In the C-terminal section; belongs to the class-I pyridoxal-phosphate-dependent aminotransferase family. Pyridoxal 5'-phosphate serves as cofactor.

This is an uncharacterized protein from Bacillus subtilis (strain 168).